A 767-amino-acid polypeptide reads, in one-letter code: Probable beta-glucosidase K (767 aa).

An N-linked (GlcNAc...) asparagine glycan is attached at Asn-19. Asp-232 is a catalytic residue. Residues Asn-324, Asn-477, and Asn-749 are each glycosylated (N-linked (GlcNAc...) asparagine). Residues 405 to 552 (EGQPGLRMRF…DPERAIARAV (148 aa)) form the PA14 domain. A disordered region spans residues 727–767 (LGRRGRSGSSPAVYRGRSNNVVNRTSHQGAQRISKGGFAAR). Over residues 743–757 (RSNNVVNRTSHQGAQ) the composition is skewed to polar residues.

Belongs to the glycosyl hydrolase 3 family.

It is found in the secreted. The enzyme catalyses Hydrolysis of terminal, non-reducing beta-D-glucosyl residues with release of beta-D-glucose.. Its pathway is glycan metabolism; cellulose degradation. Its function is as follows. Beta-glucosidases are one of a number of cellulolytic enzymes involved in the degradation of cellulosic biomass. Catalyzes the last step releasing glucose from the inhibitory cellobiose. In Aspergillus fumigatus (strain ATCC MYA-4609 / CBS 101355 / FGSC A1100 / Af293) (Neosartorya fumigata), this protein is Probable beta-glucosidase K (bglK).